Consider the following 110-residue polypeptide: PHD finger-like domain-containing protein 5A (110 aa).

A2 carries the post-translational modification N-acetylalanine. K3 is modified (N6-acetyllysine). Positions 11, 23, 26, 30, 33, 46, 49, 58, 61, 72, and 75 each coordinate Zn(2+). Residues S35–Y51 are interaction with SF3B1 and SF3B3. The tract at residues E79–R82 is interaction with SF3B3. C85 provides a ligand contact to Zn(2+). At S94 the chain carries Phosphoserine.

This sequence belongs to the PHF5 family. Component of the 17S U2 SnRNP complex, a ribonucleoprotein complex that contains small nuclear RNA (snRNA) U2 and a number of specific proteins. Part of the SF3B subcomplex of the 17S U2 SnRNP complex. SF3B associates with the splicing subcomplex SF3A and a 12S RNA unit to form the U2 small nuclear ribonucleoproteins complex (U2 snRNP). Within the SF3B complex interacts directly with SF3B1 and SF3B3. Component of the minor spliceosome, which splices U12-type introns. Within this complex, interacts with CRIPT. Interacts (via N-terminus) with U2AF1 and SRSF5; acts to bridge the two. Interacts (via C-terminus) with EP400 and DDX1; acts to bridge the two. Interacts with the PAF1 complex (PAF1C) composed of CDC73, PAF1, LEO1, CTR9, RTF1 and SKIC8. Within the PAF1C interacts directly with CDC73 and SKIC8. Interacts with RNA polymerase II. As to expression, expressed in primary spermatocytes (at protein level). Ubiquitously expressed in pre- and postnatal tissues. Highly expressed in pluripotent embryonic stem cells (ESCs) (at protein level) and induced pluripotent stem cells (iPSCs).

The protein localises to the nucleus. Its subcellular location is the nucleus speckle. Component of the 17S U2 SnRNP complex of the spliceosome, a large ribonucleoprotein complex that removes introns from transcribed pre-mRNAs. The 17S U2 SnRNP complex (1) directly participates in early spliceosome assembly and (2) mediates recognition of the intron branch site during pre-mRNA splicing by promoting the selection of the pre-mRNA branch-site adenosine, the nucleophile for the first step of splicing. Within the 17S U2 SnRNP complex, PHF5A is part of the SF3B subcomplex, which is required for 'A' complex assembly formed by the stable binding of U2 snRNP to the branchpoint sequence in pre-mRNA. Sequence independent binding of SF3A and SF3B subcomplexes upstream of the branch site is essential, it may anchor U2 snRNP to the pre-mRNA. Also acts as a component of the minor spliceosome, which is involved in the splicing of U12-type introns in pre-mRNAs. Also involved in elongation by RNA polymerase II as part of the PAF1 complex (PAF1C). PAF1C is required for maintenance of embryonic stem cell (ESC) self-renewal and cellular reprogramming of stem cells. Maintains pluripotency by recruiting and stabilizing PAF1C on pluripotency genes loci, and by regulating the expression of the pluripotency genes. Regulates the deposition of elongation-associated histone modifications, including dimethylated histone H3 'Lys-79' (H3K79me2) and trimethylated histone H3 'Lys-36' (H3K36me3), on PAF1C targets, self-renewal and pluripotency genes. Regulates RNA polymerase II promoter-proximal pause release of the PAF1C targets and self-renewal genes, and the levels of elongating ('Ser-2' phosphorylated) RNA polymerase II in their gene bodies. Regulates muscle specification in adult stem cells by stabilizing PAF1C in chromatin to promote myogenic differentiation. Acts as a transcriptional regulator by binding to the GJA1/Cx43 promoter and enhancing its up-regulation by ESR1/ER-alpha. The chain is PHD finger-like domain-containing protein 5A (Phf5a) from Mus musculus (Mouse).